A 192-amino-acid polypeptide reads, in one-letter code: dCTP deaminase, dUMP-forming (192 aa).

DCTP contacts are provided by residues 101–106 (KSSLGR), aspartate 119, 127–129 (TLE), glutamine 148, tyrosine 162, and glutamine 174. Glutamate 129 functions as the Proton donor/acceptor in the catalytic mechanism. A disordered region spans residues 171-192 (YQGQRGPTPSRSWQSWHTWPTR).

Belongs to the dCTP deaminase family. As to quaternary structure, homotrimer.

The enzyme catalyses dCTP + 2 H2O = dUMP + NH4(+) + diphosphate. The protein operates within pyrimidine metabolism; dUMP biosynthesis; dUMP from dCTP: step 1/1. Its function is as follows. Bifunctional enzyme that catalyzes both the deamination of dCTP to dUTP and the hydrolysis of dUTP to dUMP without releasing the toxic dUTP intermediate. The chain is dCTP deaminase, dUMP-forming from Salinispora arenicola (strain CNS-205).